The sequence spans 153 residues: Nitrogen regulatory protein (153 aa).

In terms of domain architecture, PTS EIIA type-2 spans 5 to 148; the sequence is DLVAPEAILP…QAIYSVLALP (144 aa). The Tele-phosphohistidine intermediate role is filled by H66.

The protein localises to the cytoplasm. Its function is as follows. Seems to have a role in regulating nitrogen assimilation. In Bradyrhizobium diazoefficiens (strain JCM 10833 / BCRC 13528 / IAM 13628 / NBRC 14792 / USDA 110), this protein is Nitrogen regulatory protein (ptsN).